The following is a 341-amino-acid chain: tRNA N6-adenosine threonylcarbamoyltransferase (341 aa).

Positions 115 and 119 each coordinate Fe cation. Substrate is bound by residues 137–141 (IVSGG), Asp-170, Gly-183, Asp-187, and Asn-276. A Fe cation-binding site is contributed by Asp-304.

The protein belongs to the KAE1 / TsaD family. Fe(2+) is required as a cofactor.

It is found in the cytoplasm. It carries out the reaction L-threonylcarbamoyladenylate + adenosine(37) in tRNA = N(6)-L-threonylcarbamoyladenosine(37) in tRNA + AMP + H(+). Functionally, required for the formation of a threonylcarbamoyl group on adenosine at position 37 (t(6)A37) in tRNAs that read codons beginning with adenine. Is involved in the transfer of the threonylcarbamoyl moiety of threonylcarbamoyl-AMP (TC-AMP) to the N6 group of A37, together with TsaE and TsaB. TsaD likely plays a direct catalytic role in this reaction. This chain is tRNA N6-adenosine threonylcarbamoyltransferase, found in Staphylococcus aureus (strain USA300).